The following is a 791-amino-acid chain: Ubiquitin carboxyl-terminal hydrolase 10-A (791 aa).

2 stretches are compositionally biased toward polar residues: residues 118–139 (FSES…SGTG) and 270–284 (DTTE…QTLE). Disordered regions lie at residues 118 to 156 (FSES…YYSY) and 270 to 291 (DTTE…EDTA). Residues 408-788 (RGLINKGNWC…TAYLLYYRRV (381 aa)) form the USP domain. Residue C417 is the Nucleophile of the active site. Residues 560–580 (EVNKEEQEGSDEEWEQVGPRN) form a disordered region. The Proton acceptor role is filled by H742.

This sequence belongs to the peptidase C19 family. USP10 subfamily.

Its subcellular location is the cytoplasm. It localises to the nucleus. It carries out the reaction Thiol-dependent hydrolysis of ester, thioester, amide, peptide and isopeptide bonds formed by the C-terminal Gly of ubiquitin (a 76-residue protein attached to proteins as an intracellular targeting signal).. In terms of biological role, hydrolase that can remove conjugated ubiquitin from target proteins such as p53/tp53, rps2/us5, rps3/us3, rps10/eS10, becn1, snx3 and cftr. Acts as an essential regulator of p53/tp53 stability: in unstressed cells, specifically deubiquitinates p53/tp53 in the cytoplasm, leading to counteracts MDM2 action and stabilize p53/tp53. Following DNA damage, translocates to the nucleus and deubiquitinates p53/tp53, leading to regulate the p53/TP53-dependent DNA damage response. Component of a regulatory loop that controls autophagy and p53/tp53 levels. Plays a key role in 40S ribosome subunit recycling when a ribosome has stalled during translation: acts both by inhibiting formation of stress granules, which store stalled translation pre-initiation complexes, and mediating deubiquitination of 40S ribosome subunits. Deubiquitinates cftr in early endosomes, enhancing its endocytic recycling. The sequence is that of Ubiquitin carboxyl-terminal hydrolase 10-A (usp10-a) from Xenopus laevis (African clawed frog).